The primary structure comprises 149 residues: Transcriptional repressor NrdR (149 aa).

A zinc finger lies at 3–34 (CPFCSENDTKVIDSRLVADGHQVRRRRQCLAC). The ATP-cone domain maps to 49–139 (PKVIKSNGNR…VYRSFEDIRE (91 aa)).

Belongs to the NrdR family. It depends on Zn(2+) as a cofactor.

Its function is as follows. Negatively regulates transcription of bacterial ribonucleotide reductase nrd genes and operons by binding to NrdR-boxes. This Vibrio parahaemolyticus serotype O3:K6 (strain RIMD 2210633) protein is Transcriptional repressor NrdR.